Consider the following 251-residue polypeptide: Ubiquinone/menaquinone biosynthesis C-methyltransferase UbiE (251 aa).

Residues threonine 74, aspartate 95, 123–124 (NA), and serine 140 contribute to the S-adenosyl-L-methionine site.

Belongs to the class I-like SAM-binding methyltransferase superfamily. MenG/UbiE family.

It carries out the reaction a 2-demethylmenaquinol + S-adenosyl-L-methionine = a menaquinol + S-adenosyl-L-homocysteine + H(+). The catalysed reaction is a 2-methoxy-6-(all-trans-polyprenyl)benzene-1,4-diol + S-adenosyl-L-methionine = a 5-methoxy-2-methyl-3-(all-trans-polyprenyl)benzene-1,4-diol + S-adenosyl-L-homocysteine + H(+). Its pathway is quinol/quinone metabolism; menaquinone biosynthesis; menaquinol from 1,4-dihydroxy-2-naphthoate: step 2/2. It participates in cofactor biosynthesis; ubiquinone biosynthesis. Functionally, methyltransferase required for the conversion of demethylmenaquinol (DMKH2) to menaquinol (MKH2) and the conversion of 2-polyprenyl-6-methoxy-1,4-benzoquinol (DDMQH2) to 2-polyprenyl-3-methyl-6-methoxy-1,4-benzoquinol (DMQH2). The protein is Ubiquinone/menaquinone biosynthesis C-methyltransferase UbiE of Serratia proteamaculans (strain 568).